Reading from the N-terminus, the 567-residue chain is Glucose-6-phosphate isomerase, cytosolic A (567 aa).

Residues G156 to S157, S212 to T217, Q356, E360, H391, and K516 contribute to the D-glucose 6-phosphate site. Catalysis depends on E360, which acts as the Proton donor. Residues H391 and K516 contribute to the active site.

It belongs to the GPI family. As to quaternary structure, homodimer.

Its subcellular location is the cytoplasm. The enzyme catalyses alpha-D-glucose 6-phosphate = beta-D-fructose 6-phosphate. It participates in carbohydrate degradation; glycolysis; D-glyceraldehyde 3-phosphate and glycerone phosphate from D-glucose: step 2/4. In terms of biological role, catalyzes the conversion of glucose-6-phosphate to fructose-6-phosphate, the second step in glycolysis, and the reverse reaction during gluconeogenesis. In Oryza sativa subsp. japonica (Rice), this protein is Glucose-6-phosphate isomerase, cytosolic A.